A 369-amino-acid polypeptide reads, in one-letter code: 4-hydroxy-3-methylbut-2-en-1-yl diphosphate synthase (flavodoxin) (369 aa).

The [4Fe-4S] cluster site is built by cysteine 270, cysteine 273, cysteine 305, and glutamate 312.

It belongs to the IspG family. [4Fe-4S] cluster serves as cofactor.

It catalyses the reaction (2E)-4-hydroxy-3-methylbut-2-enyl diphosphate + oxidized [flavodoxin] + H2O + 2 H(+) = 2-C-methyl-D-erythritol 2,4-cyclic diphosphate + reduced [flavodoxin]. It participates in isoprenoid biosynthesis; isopentenyl diphosphate biosynthesis via DXP pathway; isopentenyl diphosphate from 1-deoxy-D-xylulose 5-phosphate: step 5/6. Functionally, converts 2C-methyl-D-erythritol 2,4-cyclodiphosphate (ME-2,4cPP) into 1-hydroxy-2-methyl-2-(E)-butenyl 4-diphosphate. This Pseudomonas fluorescens (strain SBW25) protein is 4-hydroxy-3-methylbut-2-en-1-yl diphosphate synthase (flavodoxin).